A 596-amino-acid polypeptide reads, in one-letter code: ATP-binding protein Uup (596 aa).

2 ABC transporter domains span residues 1-222 (MSLI…RIEK) and 290-516 (FKLD…SKIN). Residues 36-43 (GKNGAGKS) and 322-329 (GDNGCGKS) contribute to the ATP site. The segment at 519-596 (IKIKNNFKKE…LEKNIINTKI (78 aa)) is C-terminal domain (CTD), binds DNA.

It belongs to the ABC transporter superfamily. ABCF family. Uup subfamily.

The protein localises to the cytoplasm. It catalyses the reaction ATP + H2O = ADP + phosphate + H(+). In terms of biological role, probably plays a role in ribosome assembly or function. May be involved in resolution of branched DNA intermediates that result from template switching in postreplication gaps. Binds DNA and has ATPase activity. This Buchnera aphidicola subsp. Acyrthosiphon pisum (strain APS) (Acyrthosiphon pisum symbiotic bacterium) protein is ATP-binding protein Uup.